Reading from the N-terminus, the 352-residue chain is UDP-N-acetylglucosamine--N-acetylmuramyl-(pentapeptide) pyrophosphoryl-undecaprenol N-acetylglucosamine transferase (352 aa).

Residues 14 to 16 (TGG), N124, R164, S185, and Q285 each bind UDP-N-acetyl-alpha-D-glucosamine.

Belongs to the glycosyltransferase 28 family. MurG subfamily.

The protein localises to the cell inner membrane. The enzyme catalyses di-trans,octa-cis-undecaprenyl diphospho-N-acetyl-alpha-D-muramoyl-L-alanyl-D-glutamyl-meso-2,6-diaminopimeloyl-D-alanyl-D-alanine + UDP-N-acetyl-alpha-D-glucosamine = di-trans,octa-cis-undecaprenyl diphospho-[N-acetyl-alpha-D-glucosaminyl-(1-&gt;4)]-N-acetyl-alpha-D-muramoyl-L-alanyl-D-glutamyl-meso-2,6-diaminopimeloyl-D-alanyl-D-alanine + UDP + H(+). It functions in the pathway cell wall biogenesis; peptidoglycan biosynthesis. Cell wall formation. Catalyzes the transfer of a GlcNAc subunit on undecaprenyl-pyrophosphoryl-MurNAc-pentapeptide (lipid intermediate I) to form undecaprenyl-pyrophosphoryl-MurNAc-(pentapeptide)GlcNAc (lipid intermediate II). This chain is UDP-N-acetylglucosamine--N-acetylmuramyl-(pentapeptide) pyrophosphoryl-undecaprenol N-acetylglucosamine transferase, found in Chlamydia trachomatis serovar A (strain ATCC VR-571B / DSM 19440 / HAR-13).